An 858-amino-acid chain; its full sequence is Elongation factor 2 (858 aa).

In terms of domain architecture, tr-type G spans Ala17–Val362. Ala26 to Ser33 contributes to the GTP binding site. Phosphothreonine is present on Thr54. Thr57 bears the Phosphothreonine; by EEF2K mark. At Thr59 the chain carries Phosphothreonine. At Lys152 the chain carries N6-succinyllysine. Residues Asn158–Asp161 and Ser216–Leu218 contribute to the GTP site. Lys235 is subject to N6-acetyllysine. Lys239 is subject to N6-acetyllysine; alternate. Lys239 participates in a covalent cross-link: Glycyl lysine isopeptide (Lys-Gly) (interchain with G-Cter in SUMO1); alternate. Tyr265 carries the phosphotyrosine; by CSK modification. Lys272 carries the post-translational modification N6-acetyllysine; alternate. N6-succinyllysine; alternate is present on Lys272. Lys275 carries the N6-acetyllysine modification. Residue Lys322 forms a Glycyl lysine isopeptide (Lys-Gly) (interchain with G-Cter in SUMO) linkage. Ser325 is modified (phosphoserine). Residue Tyr373 is modified to Phosphotyrosine; by CSK. Thr435 is modified (phosphothreonine). 2 positions are modified to N6-acetyllysine: Lys439 and Lys445. Ser502 is modified (phosphoserine). N6,N6,N6-trimethyllysine; by EEF2KMT is present on Lys525. Lys529 is covalently cross-linked (Glycyl lysine isopeptide (Lys-Gly) (interchain with G-Cter in SUMO)). Lys572 is modified (N6-succinyllysine). Ser595 is modified (phosphoserine; by CDK2). Lys619 carries the post-translational modification N6-acetyllysine. Diphthamide is present on His715.

Belongs to the TRAFAC class translation factor GTPase superfamily. Classic translation factor GTPase family. EF-G/EF-2 subfamily. As to quaternary structure, binds to 80S ribosomes. Actively translating ribosomes show mutually exclusive binding of eIF5a (EIF5A or EIF5A2) and EEF2/eEF2. Interacts with SERBP1; interaction sequesters EEF2/eEF2 at the A-site of the ribosome, thereby blocking the interaction sites of the mRNA-tRNA complex, promoting ribosome stabilization and hibernation. Interacts with HABP4; interaction takes place at the A-site of hibernating ribosomes and promotes ribosome stabilization. Component of the mRNA surveillance SURF complex, at least composed of ERF1, ERF3 (ERF3A or ERF3B), EEF2, UPF1/RENT1, SMG1, SMG8 and SMG9. Interacts with RBPMS2. In terms of processing, phosphorylation by EF-2 kinase completely inactivates EF-2; it requires prior phosphorylation by CDK2 at Ser-595 during mitotic prometaphase. Phosphorylation by CSK promotes SUMOylation, proteolytic cleavage, and nuclear translocation if the C-terminal fragment. Post-translationally, diphthamide is 2-[3-carboxyamido-3-(trimethyl-ammonio)propyl]histidine. ISGylated. In terms of processing, proteolytically processed at two sites following phosphorylation by CSK. Post-translationally, SUMOylated following phosphorylation by CSK, promotes proteolytic cleavage.

The protein localises to the cytoplasm. It localises to the nucleus. The catalysed reaction is GTP + H2O = GDP + phosphate + H(+). Functionally, catalyzes the GTP-dependent ribosomal translocation step during translation elongation. During this step, the ribosome changes from the pre-translocational (PRE) to the post-translocational (POST) state as the newly formed A-site-bound peptidyl-tRNA and P-site-bound deacylated tRNA move to the P and E sites, respectively. Catalyzes the coordinated movement of the two tRNA molecules, the mRNA and conformational changes in the ribosome. The chain is Elongation factor 2 (EEF2) from Callithrix jacchus (White-tufted-ear marmoset).